An 82-amino-acid chain; its full sequence is MTRILLLLLRFYQYFISPLLGNNCRFHPTCSEYAKEAITTHGTLKGLWLTFKRIIKCQPFCNGGYDAVPLSIKNSKLFNKKI.

Belongs to the UPF0161 family.

The protein localises to the cell inner membrane. Its function is as follows. Could be involved in insertion of integral membrane proteins into the membrane. The sequence is that of Putative membrane protein insertion efficiency factor from Rickettsia felis (strain ATCC VR-1525 / URRWXCal2) (Rickettsia azadi).